A 284-amino-acid polypeptide reads, in one-letter code: Tropomyosin Tod p 1.0102 (284 aa).

The stretch at 15–273 (KEVATDKAEQ…KERYKSISDE (259 aa)) forms a coiled coil. The segment at 103–136 (EERLTSAQSKLEDASKAADESERGRKVLENRSQG) is disordered.

This sequence belongs to the tropomyosin family. In terms of assembly, homodimer. The N-terminus is blocked. In terms of tissue distribution, expressed in mantle muscle (at protein level).

Tropomyosin, in association with the troponin complex, plays a central role in the calcium dependent regulation of muscle contraction. This is Tropomyosin Tod p 1.0102 from Todarodes pacificus (Japanese flying squid).